The chain runs to 623 residues: Glutathione import ATP-binding protein GsiA (623 aa).

ABC transporter domains follow at residues 15 to 269 and 325 to 564; these read VSGL…QTLL and LRSG…RKLM. Residues 49 to 56 and 357 to 364 contribute to the ATP site; these read GESGSGKS.

Belongs to the ABC transporter superfamily. Glutathione importer (TC 3.A.1.5.11) family. As to quaternary structure, the complex is composed of two ATP-binding proteins (GsiA), two transmembrane proteins (GsiC and GsiD) and a solute-binding protein (GsiB).

Its subcellular location is the cell inner membrane. The enzyme catalyses glutathione(out) + ATP + H2O = glutathione(in) + ADP + phosphate + H(+). Its function is as follows. Part of the ABC transporter complex GsiABCD involved in glutathione import. Responsible for energy coupling to the transport system. This chain is Glutathione import ATP-binding protein GsiA, found in Salmonella typhi.